Reading from the N-terminus, the 291-residue chain is ATP synthase gamma chain (291 aa).

This sequence belongs to the ATPase gamma chain family. As to quaternary structure, F-type ATPases have 2 components, CF(1) - the catalytic core - and CF(0) - the membrane proton channel. CF(1) has five subunits: alpha(3), beta(3), gamma(1), delta(1), epsilon(1). CF(0) has three main subunits: a, b and c.

It localises to the cell inner membrane. Functionally, produces ATP from ADP in the presence of a proton gradient across the membrane. The gamma chain is believed to be important in regulating ATPase activity and the flow of protons through the CF(0) complex. In Variovorax paradoxus (strain S110), this protein is ATP synthase gamma chain.